Consider the following 527-residue polypeptide: Catalase (527 aa).

Residues 1–22 (MADSRDPASDQMKQWKEQRAPQ) are compositionally biased toward basic and acidic residues. The interval 1-34 (MADSRDPASDQMKQWKEQRAPQKPDVLTTGGGNP) is disordered. Position 2 is an N-acetylalanine (Ala2). Ser9 carries the phosphoserine modification. Lys13 carries the post-translational modification N6-succinyllysine. Residues His75 and Asn148 contribute to the active site. His194, Ser201, Arg203, and Asn213 together coordinate NADP(+). The residue at position 221 (Lys221) is an N6-succinyllysine. An N6-acetyllysine modification is found at Lys233. Residues Lys237, Trp303, His305, and Lys306 each contribute to the NADP(+) site. Lys306 is subject to N6-acetyllysine; alternate. Lys306 carries the N6-succinyllysine; alternate modification. Tyr358 contacts heme. Phosphoserine is present on residues Ser417 and Ser434. N6-acetyllysine; alternate occurs at positions 449 and 480. An N6-succinyllysine; alternate mark is found at Lys449 and Lys480. Thr511 carries the post-translational modification Phosphothreonine. Position 517 is a phosphoserine (Ser517). The residue at position 522 (Lys522) is an N6-succinyllysine. The short motif at 524-527 (KANL) is the Microbody targeting signal; atypical element.

It belongs to the catalase family. Homotetramer. Interacts (via microbody targeting signal) with PEX5, monomeric form interacts with PEX5, leading to its translocation into peroxisomes. Heme is required as a cofactor. Requires NADP(+) as cofactor. Expressed in renal proximal tubules (at protein level).

Its subcellular location is the peroxisome matrix. It catalyses the reaction 2 H2O2 = O2 + 2 H2O. Catalyzes the degradation of hydrogen peroxide (H(2)O(2)) generated by peroxisomal oxidases to water and oxygen, thereby protecting cells from the toxic effects of hydrogen peroxide. Promotes growth of cells including T-cells, B-cells, myeloid leukemia cells, melanoma cells, mastocytoma cells and normal and transformed fibroblast cells. This is Catalase (Cat) from Rattus norvegicus (Rat).